The following is a 298-amino-acid chain: Zinc import ATP-binding protein ZnuC (298 aa).

The region spanning 17 to 232 (IELRNAGVYR…PEYVRLFGSR (216 aa)) is the ABC transporter domain. Residue 49 to 56 (GPNGAGKS) participates in ATP binding. The disordered stretch occupies residues 273-298 (RGHCHVEDGHHHDHEHHHHEGGQPRA). Residues 276–298 (CHVEDGHHHDHEHHHHEGGQPRA) are compositionally biased toward basic and acidic residues.

Belongs to the ABC transporter superfamily. Zinc importer (TC 3.A.1.15.5) family. The complex is composed of two ATP-binding proteins (ZnuC), two transmembrane proteins (ZnuB) and a solute-binding protein (ZnuA).

Its subcellular location is the cell inner membrane. The catalysed reaction is Zn(2+)(out) + ATP(in) + H2O(in) = Zn(2+)(in) + ADP(in) + phosphate(in) + H(+)(in). In terms of biological role, part of the ABC transporter complex ZnuABC involved in zinc import. Responsible for energy coupling to the transport system. This is Zinc import ATP-binding protein ZnuC from Brucella suis biovar 1 (strain 1330).